The sequence spans 593 residues: Gamma-humulene synthase (593 aa).

Over residues 1 to 26 (MAQISESVSPSTDLKSTESSITSNRH) the composition is skewed to polar residues. The disordered stretch occupies residues 1 to 34 (MAQISESVSPSTDLKSTESSITSNRHGNMWEDDR). Residues Asp-343, Asp-347, Asp-488, and Glu-496 each coordinate Mg(2+). Positions 343-347 (DDLYD) match the DDXXD motif motif.

This sequence belongs to the terpene synthase family. Tpsd subfamily. The cofactor is Mg(2+). It depends on K(+) as a cofactor.

It is found in the cytoplasm. The catalysed reaction is (2E,6E)-farnesyl diphosphate = gamma-humulene + diphosphate. The enzyme catalyses (2E,6E)-farnesyl diphosphate = sibirene + diphosphate. It carries out the reaction (2E,6E)-farnesyl diphosphate = longifolene + diphosphate. It catalyses the reaction (2E,6E)-farnesyl diphosphate = beta-himachalene + diphosphate. The catalysed reaction is (2E,6E)-farnesyl diphosphate = gamma-himachalene + diphosphate. The enzyme catalyses (2E,6E)-farnesyl diphosphate = alpha-himachalene + diphosphate. The protein operates within terpene metabolism; oleoresin biosynthesis. Its function is as follows. Involved in defensive oleoresin formation in conifers in response to insect attack or other injury. Involved in 52 sesquiterpene (C15) olefins biosynthesis. In Abies grandis (Grand fir), this protein is Gamma-humulene synthase (ag5).